The primary structure comprises 226 residues: Octanoyltransferase (226 aa).

The BPL/LPL catalytic domain maps to 37–220; sequence GTAGELIWLL…SFSKVFGPVE (184 aa). Residues 76–83, 151–153, and 164–166 contribute to the substrate site; these read RGGQFTYH, AIG, and GIS. The active-site Acyl-thioester intermediate is C182.

The protein belongs to the LipB family.

The protein resides in the cytoplasm. The catalysed reaction is octanoyl-[ACP] + L-lysyl-[protein] = N(6)-octanoyl-L-lysyl-[protein] + holo-[ACP] + H(+). Its pathway is protein modification; protein lipoylation via endogenous pathway; protein N(6)-(lipoyl)lysine from octanoyl-[acyl-carrier-protein]: step 1/2. Catalyzes the transfer of endogenously produced octanoic acid from octanoyl-acyl-carrier-protein onto the lipoyl domains of lipoate-dependent enzymes. Lipoyl-ACP can also act as a substrate although octanoyl-ACP is likely to be the physiological substrate. The chain is Octanoyltransferase from Caulobacter vibrioides (strain ATCC 19089 / CIP 103742 / CB 15) (Caulobacter crescentus).